The sequence spans 388 residues: Galactokinase (388 aa).

32–35 (EHTD) is a substrate binding site. ATP is bound by residues Ser66 and 123-129 (GASLSSS). Mg(2+)-binding residues include Ser129 and Glu161. The active-site Proton acceptor is Asp173. Tyr223 is a substrate binding site.

This sequence belongs to the GHMP kinase family. GalK subfamily.

It is found in the cytoplasm. The enzyme catalyses alpha-D-galactose + ATP = alpha-D-galactose 1-phosphate + ADP + H(+). Its pathway is carbohydrate metabolism; galactose metabolism. In terms of biological role, catalyzes the transfer of the gamma-phosphate of ATP to D-galactose to form alpha-D-galactose-1-phosphate (Gal-1-P). In Staphylococcus carnosus (strain TM300), this protein is Galactokinase.